Consider the following 518-residue polypeptide: Protein nucleotidyltransferase YdiU (518 aa).

The segment covering M1–L10 has biased composition (basic and acidic residues). Residues M1 to R25 are disordered. G100, G102, R103, K123, D135, G136, R193, and R200 together coordinate ATP. Residue D270 is the Proton acceptor of the active site. Positions 271 and 280 each coordinate Mg(2+). ATP is bound at residue D280.

Belongs to the SELO family. It depends on Mg(2+) as a cofactor. Requires Mn(2+) as cofactor.

It catalyses the reaction L-seryl-[protein] + ATP = 3-O-(5'-adenylyl)-L-seryl-[protein] + diphosphate. The catalysed reaction is L-threonyl-[protein] + ATP = 3-O-(5'-adenylyl)-L-threonyl-[protein] + diphosphate. It carries out the reaction L-tyrosyl-[protein] + ATP = O-(5'-adenylyl)-L-tyrosyl-[protein] + diphosphate. The enzyme catalyses L-histidyl-[protein] + UTP = N(tele)-(5'-uridylyl)-L-histidyl-[protein] + diphosphate. It catalyses the reaction L-seryl-[protein] + UTP = O-(5'-uridylyl)-L-seryl-[protein] + diphosphate. The catalysed reaction is L-tyrosyl-[protein] + UTP = O-(5'-uridylyl)-L-tyrosyl-[protein] + diphosphate. Functionally, nucleotidyltransferase involved in the post-translational modification of proteins. It can catalyze the addition of adenosine monophosphate (AMP) or uridine monophosphate (UMP) to a protein, resulting in modifications known as AMPylation and UMPylation. In Xanthomonas euvesicatoria pv. vesicatoria (strain 85-10) (Xanthomonas campestris pv. vesicatoria), this protein is Protein nucleotidyltransferase YdiU.